The chain runs to 254 residues: 4-hydroxy-tetrahydrodipicolinate reductase (254 aa).

7-12 (GASGRI) is an NAD(+) binding site. NADP(+) is bound at residue arginine 35. Residues 91–93 (GTT) and 115–118 (AHNM) each bind NAD(+). Residue histidine 147 is the Proton donor/acceptor of the active site. Histidine 148 contributes to the (S)-2,3,4,5-tetrahydrodipicolinate binding site. Lysine 151 acts as the Proton donor in catalysis. Residue 157 to 158 (GT) coordinates (S)-2,3,4,5-tetrahydrodipicolinate.

The protein belongs to the DapB family.

Its subcellular location is the cytoplasm. The catalysed reaction is (S)-2,3,4,5-tetrahydrodipicolinate + NAD(+) + H2O = (2S,4S)-4-hydroxy-2,3,4,5-tetrahydrodipicolinate + NADH + H(+). It catalyses the reaction (S)-2,3,4,5-tetrahydrodipicolinate + NADP(+) + H2O = (2S,4S)-4-hydroxy-2,3,4,5-tetrahydrodipicolinate + NADPH + H(+). Its pathway is amino-acid biosynthesis; L-lysine biosynthesis via DAP pathway; (S)-tetrahydrodipicolinate from L-aspartate: step 4/4. Its function is as follows. Catalyzes the conversion of 4-hydroxy-tetrahydrodipicolinate (HTPA) to tetrahydrodipicolinate. The protein is 4-hydroxy-tetrahydrodipicolinate reductase of Helicobacter pylori (strain G27).